The primary structure comprises 2117 residues: MCSIPGLPSKGSNVPVLITRVNLNPSCVLVEFWGNFDEDRKFAYQQLKKEIQYPRECFSESDGNPGDLCLVQVYETWYRARIVSRDSDEYSVFLIDEGRTLRAAVNTLAWGKSDFFYLPPEVEFCILANALPLSPENNWSSMALEFMKTFCGRRVNATVQDVLVAHRTFLLDIPCLSRQMFEMGFAKKLYSDQFMEFVVRSLQASTGTSDLKRISSIRTKPVEIIEQKEKQQAYMFPELQTDTVETVVITEVTSPFRIFCQLKVFSQELKKLTEQITQYYEGRVGSYFARAENLGSPCASRGSDGKWYRSVLQQVMSANNVVEVLHVDYGKKQFVQVENVKPLASEFFRMPVVTYVCSLHGIVDKGVGWTASQIDYLKSLLLNRTVIAKFQYQSLSEGVHYVTLYGEENTNINKLFELKPKCSLDSDMTLADFAVQKSPSSQKSKISRTTESTHINETYSDLKVNKPVFFTETLTPNSTHMAVVQHVDSPGKFWIQTQRYADEFDLLMNGLGNLYSDPTSTESLIRKPVVGLICAAKAQDGVFYRAAVYKVIDKTAEVYFLDYGNTEVVDSFNLRQLPLRFQQLPAVAVKCSLHGVKPRLKLWEERATLFFSKLVRDRIIDLHVQDKQQDTHIVQLVDPSLDGEKDVSKLLCNAGFAVSEKSIVDYSATRSCGLKTTHASGVFLTGTQPQTPCSSSVVMDSASAFKEYLFPIGSSLEVTVSYIENPNDFWCQKARNAACLEVLMQDIQRFYSHSEFEPLLEAACVARHPETGIWYRALVIQKHQTPHVDVLFIDYGQTKKVAIEDLRKITPAFLKMKGQAFRCSLYNLIHPVLHSSSDWSTEATLEFQEFVDAAASMNVPLKCTIFAVMYDSQKVVFNVVDLETPFQSICNLLVQRRLADRAPSKRSPLPPFRLDTYYYSTHGVKTGCDEKVSITCVKGVNQFFCHLARNSDEVEKLAEKVNFLCHQLEATKCPQTFGTVCFAKYTDGLWYRGQIKSTKPSVVINFVDYGDTLEVDKSDLLPVPIEAGDIMSVPVQAIECGLSDMPEELPCEVDNWFRKFADSHCFTALIVAKEPAGKLILELYDGKTQVNALIKQKFHNEIHKNDASTFKIYGLKSRAAESVEASACKKESSTGPKRDAIDQVPKSRESHAIQRSNDVASKQPQSRWGFSTNGRPEPTRDSGTINNCQKQPELRTSQGNLRHPCTSSKPEVVKPKPQALLKESALPIKSIKPGLEAEVFISHCNSPCSFFVQFATDEDDIYSLVEKLNADQSRCRNIDSSDIHEGDLVCAMFPDDSSWYRAVVRKNTNEKIDVEFVDFGNTAVISSKNVCHLGQSFASFPRYSIHCSVHKLNVDSKDQELAPNFKQVLEQNIEKVICTFVKMSGTMWEVRLDVNGVVLGSVCKDHVKPEIAIPDLKDAASEIKVCTYYKNPDISIGQVITGYTSYIKGPQLFWCQYVAMDKLQEISDMLQNIGNASETTLREDCMPVGSACIALFTEDNLWYRAKVTSKDLDTLSITFVDYGNESKVKIGDVKALPPKLSDVPPHAFDCQLEGFDVSEGFWDETADDAFYELVHDKPLNITIEKMGNSEMPHIVKLDCDGVDINTTMKSHWKTRNPETPPAELFNGAEMASDDDYVASKVNIDSVVTFDTDTDPADNETCTSALEMELSEQENLLSSTGVENEAQIDPLKMATENVTLPITESTVLSETHKKLETITEDEPVLGFTGLSDTNQHAVSKETDVGLPQHSEGASSVTIDSFLMNNTDSQLCIVEEPEAPSYEIIQSNLGCLRRATEKKPVGSECVIWSQVRRSWCTARVLKVSEEATLVLLEKYDSEVVVDPINIFEIMPEKPLQIACIEAAIANDDATKETDATLENSASKLYQTEVSDANGIAVALESEDLNGKEETFIDQMAPNDELAGQPQEEESVSCSAFLEDSKAKHMLVEGAQVHDLVQGLCPDDVESKDPQDDLNTSFEEQNDGAKMSTAVDLLLDFLDTAPRDKVQDVSETDALLEEFNIHVTEDLIVLTSDDGAESDTASDGTLHGDAVAMEVGPDTEESSCFQERSNASDCTSAEDSQVTHLTLKVEDASDDVIFVGVLQESQAVVHEPESEKEKRD.

Tudor domains follow at residues 62-118, 291-350, 527-584, 757-816, and 974-1030; these read DGNP…FFYL, AENL…FFRM, KPVV…FQQL, EPLL…FLKM, and PQTF…AGDI. A disordered region spans residues 1125-1216; it reads ASACKKESST…SSKPEVVKPK (92 aa). The segment covering 1127–1152 has biased composition (basic and acidic residues); sequence ACKKESSTGPKRDAIDQVPKSRESHA. 2 stretches are compositionally biased toward polar residues: residues 1153 to 1174 and 1181 to 1209; these read IQRS…STNG and DSGT…TSSK. 2 Tudor domains span residues 1282–1340 and 1485–1543; these read DIHE…FASF and CMPV…LSDV.

Interacts (via Tudor domain) with buc (when dimethylated on arginine residues); and may be responsible for recruitment of different protein complexes to germ plasm.

It localises to the cytoplasm. Its function is as follows. Tudor domain-containing protein involved in germ cell development, more specifically the formation of chromatoid body (during spermiogenesis), Balbiani body (during oogenesis), germ plasm (upon fertilization), and for proper miRNA expression and spliceosome maturation. Required for Balbiani body and germ plasm formation and mobility through interaction with dimethylated arginines in the prion-like protein Bucky ball (buc). Coordinates transcript deposition into future primordial germ cells. Interacts with known germ plasm mRNAs such as vasa, dazl, nanos3 and hook2. The protein is Tudor domain-containing 6 of Danio rerio (Zebrafish).